A 469-amino-acid chain; its full sequence is Ribulose bisphosphate carboxylase large chain (469 aa).

At K5 the chain carries N6,N6,N6-trimethyllysine. Substrate is bound by residues N114 and T164. K166 (proton acceptor) is an active-site residue. K168 serves as a coordination point for substrate. 3 residues coordinate Mg(2+): K192, D194, and E195. N6-carboxylysine is present on K192. The active-site Proton acceptor is H285. Substrate contacts are provided by R286, H318, and S370.

It belongs to the RuBisCO large chain family. Type I subfamily. As to quaternary structure, heterohexadecamer of 8 large chains and 8 small chains; disulfide-linked. The disulfide link is formed within the large subunit homodimers. The cofactor is Mg(2+). In terms of processing, the disulfide bond which can form in the large chain dimeric partners within the hexadecamer appears to be associated with oxidative stress and protein turnover.

It is found in the plastid. Its subcellular location is the chloroplast. It catalyses the reaction 2 (2R)-3-phosphoglycerate + 2 H(+) = D-ribulose 1,5-bisphosphate + CO2 + H2O. The catalysed reaction is D-ribulose 1,5-bisphosphate + O2 = 2-phosphoglycolate + (2R)-3-phosphoglycerate + 2 H(+). Functionally, ruBisCO catalyzes two reactions: the carboxylation of D-ribulose 1,5-bisphosphate, the primary event in carbon dioxide fixation, as well as the oxidative fragmentation of the pentose substrate in the photorespiration process. Both reactions occur simultaneously and in competition at the same active site. This is Ribulose bisphosphate carboxylase large chain from Nicandra physalodes (Apple-of-Peru).